A 193-amino-acid polypeptide reads, in one-letter code: Interferon type A3 (193 aa).

An N-terminal signal peptide occupies residues 1 to 31; the sequence is MAVPASPQHPRGYGILLLTLLLKALATTASA. 3 disulfides stabilise this stretch: Cys32–Cys129, Cys61–Cys155, and Cys68–Cys168. N-linked (GlcNAc...) asparagine glycosylation is found at Asn65, Asn71, Asn108, and Asn186.

Belongs to the alpha/beta interferon family.

The protein localises to the secreted. Functionally, has antiviral activities. This chain is Interferon type A3 (IFNA3), found in Gallus gallus (Chicken).